The primary structure comprises 428 residues: 3-phosphoshikimate 1-carboxyvinyltransferase (428 aa).

Positions 21, 22, and 26 each coordinate 3-phosphoshikimate. Lys-21 provides a ligand contact to phosphoenolpyruvate. Phosphoenolpyruvate is bound by residues Gly-91 and Arg-119. The 3-phosphoshikimate site is built by Ser-164, Gln-166, Asp-311, and Lys-338. Gln-166 lines the phosphoenolpyruvate pocket. Asp-311 serves as the catalytic Proton acceptor. The phosphoenolpyruvate site is built by Arg-342 and Arg-383.

This sequence belongs to the EPSP synthase family. In terms of assembly, monomer.

The protein resides in the cytoplasm. The catalysed reaction is 3-phosphoshikimate + phosphoenolpyruvate = 5-O-(1-carboxyvinyl)-3-phosphoshikimate + phosphate. It participates in metabolic intermediate biosynthesis; chorismate biosynthesis; chorismate from D-erythrose 4-phosphate and phosphoenolpyruvate: step 6/7. Its function is as follows. Catalyzes the transfer of the enolpyruvyl moiety of phosphoenolpyruvate (PEP) to the 5-hydroxyl of shikimate-3-phosphate (S3P) to produce enolpyruvyl shikimate-3-phosphate and inorganic phosphate. This chain is 3-phosphoshikimate 1-carboxyvinyltransferase, found in Campylobacter concisus (strain 13826).